Consider the following 173-residue polypeptide: Alpha-crystallin A chain (173 aa).

Residue M1 is modified to N-acetylmethionine. Positions 1-63 are required for complex formation with BFSP1 and BFSP2; sequence MDVTIQHPWF…RTVLDSGISE (63 aa). A Deamidated glutamine; partial modification is found at Q6. The residue at position 45 (S45) is a Phosphoserine. The residue at position 50 (Q50) is a Deamidated glutamine; partial. The sHSP domain maps to 52–162; the sequence is LFRTVLDSGI…GPSERAIPVS (111 aa). K70 and K99 each carry N6-acetyllysine. H100, E102, and H107 together coordinate Zn(2+). Residues 145-173 are disordered; the sequence is KVASGLDAGPSERAIPVSREEKPSSAPSS. An O-linked (GlcNAc) serine glycan is attached at S162.

It belongs to the small heat shock protein (HSP20) family. In terms of assembly, heteromer composed of three CRYAA and one CRYAB subunits. Zinc coordination is achieved at least by His-100, Glu-102 and His-107. His-100 and Glu-102 come from the same molecule within the oligomer, while His-107 residue is provided by another molecule. Inter-subunit bridging via zinc ions enhances stability, which is crucial as there is no protein turn over in the lens. Can also form homodimers and homotetramers (dimers of dimers) which serve as the building blocks of homooligomers. Part of a complex required for lens intermediate filament formation composed of BFSP1, BFSP2 and CRYAA. Acetylation at Lys-70 may increase chaperone activity. Post-translationally, undergoes age-dependent proteolytical cleavage at the C-terminus.

It localises to the cytoplasm. The protein localises to the nucleus. In terms of biological role, contributes to the transparency and refractive index of the lens. Acts as a chaperone, preventing aggregation of various proteins under a wide range of stress conditions. Required for the correct formation of lens intermediate filaments as part of a complex composed of BFSP1, BFSP2 and CRYAA. The sequence is that of Alpha-crystallin A chain (CRYAA) from Erinaceus europaeus (Western European hedgehog).